The primary structure comprises 234 residues: DNA repair protein RecO (234 aa).

The protein belongs to the RecO family.

Its function is as follows. Involved in DNA repair and RecF pathway recombination. In Idiomarina loihiensis (strain ATCC BAA-735 / DSM 15497 / L2-TR), this protein is DNA repair protein RecO.